Consider the following 146-residue polypeptide: Prolactin-inducible protein (146 aa).

The signal sequence occupies residues 1 to 28 (MRLLQLLFRASPATLLLVLCLQLGANKA). Residue glutamine 29 is modified to Pyrrolidone carboxylic acid. Intrachain disulfides connect cysteine 65/cysteine 91 and cysteine 89/cysteine 123. N-linked (GlcNAc...) asparagine glycosylation is present at asparagine 105.

This sequence belongs to the PIP family. Monomer. Interacts with AZGP1. Expressed in pathological conditions of the mammary gland and in several exocrine tissues, such as the lacrimal, salivary, and sweat glands.

The protein resides in the secreted. The polypeptide is Prolactin-inducible protein (PIP) (Homo sapiens (Human)).